The sequence spans 465 residues: UDP-N-acetylmuramoylalanine--D-glutamate ligase (465 aa).

116–122 (GTNGKTT) serves as a coordination point for ATP.

It belongs to the MurCDEF family.

It is found in the cytoplasm. It catalyses the reaction UDP-N-acetyl-alpha-D-muramoyl-L-alanine + D-glutamate + ATP = UDP-N-acetyl-alpha-D-muramoyl-L-alanyl-D-glutamate + ADP + phosphate + H(+). It participates in cell wall biogenesis; peptidoglycan biosynthesis. Its function is as follows. Cell wall formation. Catalyzes the addition of glutamate to the nucleotide precursor UDP-N-acetylmuramoyl-L-alanine (UMA). The protein is UDP-N-acetylmuramoylalanine--D-glutamate ligase of Thermobifida fusca (strain YX).